A 268-amino-acid polypeptide reads, in one-letter code: Eukaryotic translation initiation factor 2 subunit beta (268 aa).

Positions 1 to 12 (MADEINEIREEQ) are enriched in basic and acidic residues. The interval 1–85 (MADEINEIRE…LNNESVDAGE (85 aa)) is disordered. A2 carries the N-acetylalanine modification. S42, S80, and S112 each carry phosphoserine; by CK2. The segment at 222-246 (CLGCKSPDTILSKENRLFFLRCEKC) adopts a C4-type zinc-finger fold.

This sequence belongs to the eIF-2-beta/eIF-5 family. Eukaryotic translation initiation factor 2 eIF2 is a heterotrimeric complex composed of an alpha, a beta and a gamma subunit. In terms of processing, phosphorylated at Ser-42, Ser-80 and Ser-112 by CK2.

The protein localises to the cytoplasm. Its subcellular location is the cytosol. Functionally, component of the eIF2 complex that functions in the early steps of protein synthesis by forming a ternary complex with GTP and initiator tRNA. This complex binds to a 40S ribosomal subunit, followed by mRNA binding to form a 43S pre-initiation complex (43S PIC). Junction of the 60S ribosomal subunit to form the 80S initiation complex is preceded by hydrolysis of the GTP bound to eIF2 and release of an eIF2-GDP binary complex. In order for eIF2 to recycle and catalyze another round of initiation, the GDP bound to eIF2 must exchange with GTP by way of a reaction catalyzed by eIF2B. The sequence is that of Eukaryotic translation initiation factor 2 subunit beta from Arabidopsis thaliana (Mouse-ear cress).